The sequence spans 142 residues: uncharacterized protein (142 aa).

An N-terminal signal peptide occupies residues 1–20; sequence MPSVNEFFIFFLIVWHTCEC. Residue asparagine 80 is glycosylated (N-linked (GlcNAc...) asparagine).

This is an uncharacterized protein from Dictyostelium discoideum (Social amoeba).